The sequence spans 227 residues: Protein GET1 (227 aa).

Residues 1–3 (MSL) lie on the Lumenal side of the membrane. A helical membrane pass occupies residues 4–23 (LLTVFLIVFVTQLISWIGQN). The Cytoplasmic segment spans residues 24–107 (VLLEWAYNLY…SFSTKFNAVI (84 aa)). Residues 72–96 (AKLRRSVDKGLAELEKLNSEIATAK) adopt a coiled-coil conformation. The helical transmembrane segment at 108–128 (WALTSGVNLVIGWWYGRKAVF) threads the bilayer. Over 129–151 (YLPEGWMGPLTWWFSFPFAPRGS) the chain is Lumenal. Residues 152-168 (VSVGVWSFACKRVLLVL) traverse the membrane as a helical segment. The Cytoplasmic segment spans residues 169–227 (ERMVKELFFAETQAKEVPVGFSPSSSSSSTPNPMSKASSGSPSPRRRTTVTVESEDEKS). The segment at 184–227 (EVPVGFSPSSSSSSTPNPMSKASSGSPSPRRRTTVTVESEDEKS) is disordered. Residues 190-211 (SPSSSSSSTPNPMSKASSGSPS) show a composition bias toward low complexity.

This sequence belongs to the WRB/GET1 family. As to quaternary structure, interacts with GET3.

It localises to the endoplasmic reticulum membrane. Required for the post-translational delivery of tail-anchored (TA) proteins to the endoplasmic reticulum. Acts as a membrane receptor for soluble GET3, which recognizes and selectively binds the transmembrane domain of TA proteins in the cytosol. This is Protein GET1 from Coprinopsis cinerea (strain Okayama-7 / 130 / ATCC MYA-4618 / FGSC 9003) (Inky cap fungus).